The primary structure comprises 93 residues: Small ribosomal subunit protein uS19 (93 aa).

Belongs to the universal ribosomal protein uS19 family.

Functionally, protein S19 forms a complex with S13 that binds strongly to the 16S ribosomal RNA. The polypeptide is Small ribosomal subunit protein uS19 (Clostridium acetobutylicum (strain ATCC 824 / DSM 792 / JCM 1419 / IAM 19013 / LMG 5710 / NBRC 13948 / NRRL B-527 / VKM B-1787 / 2291 / W)).